A 239-amino-acid chain; its full sequence is Transcriptional regulatory protein RstA (239 aa).

The region spanning 3 to 116 is the Response regulatory domain; sequence TIVFVEDDAE…VLLARLRLHL (114 aa). A 4-aspartylphosphate modification is found at Asp52. Residues 136–235 constitute a DNA-binding region (ompR/PhoB-type); sequence YKALHFGTLT…VRNKGYLFAP (100 aa).

Phosphorylated by RstB.

The protein resides in the cytoplasm. Member of the two-component regulatory system RstB/RstA. The chain is Transcriptional regulatory protein RstA (rstA) from Escherichia coli (strain K12).